Reading from the N-terminus, the 234-residue chain is Large ribosomal subunit protein uL1 (234 aa).

It belongs to the universal ribosomal protein uL1 family. Part of the 50S ribosomal subunit.

Binds directly to 23S rRNA. The L1 stalk is quite mobile in the ribosome, and is involved in E site tRNA release. In terms of biological role, protein L1 is also a translational repressor protein, it controls the translation of the L11 operon by binding to its mRNA. The protein is Large ribosomal subunit protein uL1 of Cronobacter sakazakii (strain ATCC BAA-894) (Enterobacter sakazakii).